The primary structure comprises 382 residues: Mannitol-1-phosphate 5-dehydrogenase (382 aa).

Position 4–15 (4–15 (AVHFGAGNIGRG)) interacts with NAD(+).

This sequence belongs to the mannitol dehydrogenase family.

The enzyme catalyses D-mannitol 1-phosphate + NAD(+) = beta-D-fructose 6-phosphate + NADH + H(+). The protein is Mannitol-1-phosphate 5-dehydrogenase of Vibrio parahaemolyticus serotype O3:K6 (strain RIMD 2210633).